Consider the following 309-residue polypeptide: Coenzyme PQQ synthesis protein B (309 aa).

The protein belongs to the PqqB family.

It participates in cofactor biosynthesis; pyrroloquinoline quinone biosynthesis. In terms of biological role, may be involved in the transport of PQQ or its precursor to the periplasm. This Bradyrhizobium diazoefficiens (strain JCM 10833 / BCRC 13528 / IAM 13628 / NBRC 14792 / USDA 110) protein is Coenzyme PQQ synthesis protein B.